We begin with the raw amino-acid sequence, 100 residues long: Integration host factor subunit alpha 2 (100 aa).

Belongs to the bacterial histone-like protein family. In terms of assembly, heterodimer of an alpha and a beta chain.

In terms of biological role, this protein is one of the two subunits of integration host factor, a specific DNA-binding protein that functions in genetic recombination as well as in transcriptional and translational control. This is Integration host factor subunit alpha 2 from Dechloromonas aromatica (strain RCB).